We begin with the raw amino-acid sequence, 93 residues long: DNA-directed RNA polymerase subunit omega (93 aa).

It belongs to the RNA polymerase subunit omega family. As to quaternary structure, the RNAP catalytic core consists of 2 alpha, 1 beta, 1 beta' and 1 omega subunit. When a sigma factor is associated with the core the holoenzyme is formed, which can initiate transcription.

It catalyses the reaction RNA(n) + a ribonucleoside 5'-triphosphate = RNA(n+1) + diphosphate. Functionally, promotes RNA polymerase assembly. Latches the N- and C-terminal regions of the beta' subunit thereby facilitating its interaction with the beta and alpha subunits. This is DNA-directed RNA polymerase subunit omega from Glaesserella parasuis serovar 5 (strain SH0165) (Haemophilus parasuis).